Here is a 353-residue protein sequence, read N- to C-terminus: Photosystem II protein D1 (353 aa).

N-acetylthreonine is present on threonine 2. Threonine 2 bears the Phosphothreonine mark. 3 consecutive transmembrane segments (helical) span residues 29-46, 118-133, and 142-156; these read YIGWFGVLMIPTLLTATS, HFLLGVACYMGREWEL, and WIAVAYSAPVAAATA. Residue histidine 118 coordinates chlorophyll a. Tyrosine 126 lines the pheophytin a pocket. The [CaMn4O5] cluster site is built by aspartate 170 and glutamate 189. A helical transmembrane segment spans residues 197–218; sequence FHMLGVAGVFGGSLFSAMHGSL. Histidine 198 lines the chlorophyll a pocket. A quinone-binding positions include histidine 215 and 264-265; that span reads SF. Histidine 215 contacts Fe cation. Histidine 272 contributes to the Fe cation binding site. The helical transmembrane segment at 274-288 threads the bilayer; the sequence is FLAAWPVVGIWFTAL. 4 residues coordinate [CaMn4O5] cluster: histidine 332, glutamate 333, aspartate 342, and alanine 344. The propeptide occupies 345 to 353; that stretch reads AVEVPSING.

This sequence belongs to the reaction center PufL/M/PsbA/D family. PSII is composed of 1 copy each of membrane proteins PsbA, PsbB, PsbC, PsbD, PsbE, PsbF, PsbH, PsbI, PsbJ, PsbK, PsbL, PsbM, PsbT, PsbX, PsbY, PsbZ, Psb30/Ycf12, at least 3 peripheral proteins of the oxygen-evolving complex and a large number of cofactors. It forms dimeric complexes. The D1/D2 heterodimer binds P680, chlorophylls that are the primary electron donor of PSII, and subsequent electron acceptors. It shares a non-heme iron and each subunit binds pheophytin, quinone, additional chlorophylls, carotenoids and lipids. D1 provides most of the ligands for the Mn4-Ca-O5 cluster of the oxygen-evolving complex (OEC). There is also a Cl(-1) ion associated with D1 and D2, which is required for oxygen evolution. The PSII complex binds additional chlorophylls, carotenoids and specific lipids. is required as a cofactor. In terms of processing, tyr-161 forms a radical intermediate that is referred to as redox-active TyrZ, YZ or Y-Z. C-terminally processed by CTPA; processing is essential to allow assembly of the oxygen-evolving complex and thus photosynthetic growth.

It localises to the plastid. The protein localises to the chloroplast thylakoid membrane. It carries out the reaction 2 a plastoquinone + 4 hnu + 2 H2O = 2 a plastoquinol + O2. Photosystem II (PSII) is a light-driven water:plastoquinone oxidoreductase that uses light energy to abstract electrons from H(2)O, generating O(2) and a proton gradient subsequently used for ATP formation. It consists of a core antenna complex that captures photons, and an electron transfer chain that converts photonic excitation into a charge separation. The D1/D2 (PsbA/PsbD) reaction center heterodimer binds P680, the primary electron donor of PSII as well as several subsequent electron acceptors. The protein is Photosystem II protein D1 of Triticum aestivum (Wheat).